The primary structure comprises 245 residues: Ribosomal RNA large subunit methyltransferase E (245 aa).

Positions 1–26 (MTKPPVGSNRSGRKLGQKVKKGKLKA) are disordered. Residues 11-26 (SGRKLGQKVKKGKLKA) are compositionally biased toward basic residues. Glycine 81, tryptophan 83, aspartate 104, aspartate 120, and aspartate 144 together coordinate S-adenosyl-L-methionine. The active-site Proton acceptor is lysine 184.

It belongs to the class I-like SAM-binding methyltransferase superfamily. RNA methyltransferase RlmE family.

It localises to the cytoplasm. It carries out the reaction uridine(2552) in 23S rRNA + S-adenosyl-L-methionine = 2'-O-methyluridine(2552) in 23S rRNA + S-adenosyl-L-homocysteine + H(+). Specifically methylates the uridine in position 2552 of 23S rRNA at the 2'-O position of the ribose in the fully assembled 50S ribosomal subunit. In Sinorhizobium medicae (strain WSM419) (Ensifer medicae), this protein is Ribosomal RNA large subunit methyltransferase E.